The sequence spans 329 residues: MAQSTLYSRVLGTGSYLPPDRVTNQELADRLAKDGIETSDEWIVARTGIRARHFAAPDVTTSDLALVAAQRAIEAADVDPQSIDLIIVATSTPDFVFPSTACLLQNKLGIKNGGAAFDVQAVCSGFAYALATADSFIRTGQHRTALVIGAEAFSRILDFKDRTTCVLFGDGAGAVVLSASEEPGILGSALHADGSYSNILCTPGNVNRGVIAGSAFLHMDGQAVFKLAVNVLEKVAVEALSKAELASEQVDWLIPHQANIRIMTSTCRKLGLPQERMIVTVDEHGNTSAASIPLALDVAVRDGRIKRGQHVLIEGVGGGFTWGASVFRF.

Catalysis depends on residues C123 and H256. An ACP-binding region spans residues 257–261 (QANIR). N286 is a catalytic residue.

Belongs to the thiolase-like superfamily. FabH family. Homodimer.

The protein localises to the cytoplasm. It carries out the reaction malonyl-[ACP] + acetyl-CoA + H(+) = 3-oxobutanoyl-[ACP] + CO2 + CoA. It participates in lipid metabolism; fatty acid biosynthesis. In terms of biological role, catalyzes the condensation reaction of fatty acid synthesis by the addition to an acyl acceptor of two carbons from malonyl-ACP. Catalyzes the first condensation reaction which initiates fatty acid synthesis and may therefore play a role in governing the total rate of fatty acid production. Possesses both acetoacetyl-ACP synthase and acetyl transacylase activities. Its substrate specificity determines the biosynthesis of branched-chain and/or straight-chain of fatty acids. This Burkholderia mallei (strain NCTC 10247) protein is Beta-ketoacyl-[acyl-carrier-protein] synthase III.